A 177-amino-acid chain; its full sequence is Protein-export protein SecB (177 aa).

The tract at residues Met-1–Ala-22 is disordered. A compositionally biased stretch (low complexity) spans Gly-8 to Ala-22.

This sequence belongs to the SecB family. As to quaternary structure, homotetramer, a dimer of dimers. One homotetramer interacts with 1 SecA dimer.

Its subcellular location is the cytoplasm. Its function is as follows. One of the proteins required for the normal export of preproteins out of the cell cytoplasm. It is a molecular chaperone that binds to a subset of precursor proteins, maintaining them in a translocation-competent state. It also specifically binds to its receptor SecA. The sequence is that of Protein-export protein SecB from Paracoccus denitrificans (strain Pd 1222).